The primary structure comprises 84 residues: MEPSNQIFFYLRRSKLLSGLGEIRMAKGQPLGTMERCYDMLTWGECVPDNCAFSCALKRHGKGGCIKAYDNRPACVCYYTCLRS.

The N-terminal stretch at 1–28 (MEPSNQIFFYLRRSKLLSGLGEIRMAKG) is a signal peptide. 4 cysteine pairs are disulfide-bonded: cysteine 37–cysteine 81, cysteine 46–cysteine 65, cysteine 51–cysteine 75, and cysteine 55–cysteine 77.

It belongs to the DEFL family.

The protein resides in the secreted. The sequence is that of Putative defensin-like protein 139 (LCR7) from Arabidopsis thaliana (Mouse-ear cress).